We begin with the raw amino-acid sequence, 309 residues long: Ribonuclease Z (309 aa).

Zn(2+) is bound by residues His63, His65, Asp67, His68, His145, Asp216, and His274. The active-site Proton acceptor is the Asp67.

Belongs to the RNase Z family. As to quaternary structure, homodimer. Zn(2+) serves as cofactor.

The enzyme catalyses Endonucleolytic cleavage of RNA, removing extra 3' nucleotides from tRNA precursor, generating 3' termini of tRNAs. A 3'-hydroxy group is left at the tRNA terminus and a 5'-phosphoryl group is left at the trailer molecule.. Its function is as follows. Zinc phosphodiesterase, which displays some tRNA 3'-processing endonuclease activity. Probably involved in tRNA maturation, by removing a 3'-trailer from precursor tRNA. This is Ribonuclease Z from Streptococcus uberis (strain ATCC BAA-854 / 0140J).